A 757-amino-acid polypeptide reads, in one-letter code: Exo-alpha-(1-&gt;6)-L-arabinopyranosidase (757 aa).

Asp-232 is an active-site residue.

This sequence belongs to the glycosyl hydrolase 3 family. As to quaternary structure, homotetramer.

With respect to regulation, completely inhibited by Cu(2+) and Fe(2+). Its function is as follows. Catalyzes the hydrolysis of a non-reducing terminal alpha-L-arabinopyranosidic linkage in ginsenoside Rb2 (alpha-L-arabinopyranosyl-(1-&gt;6)-alpha-D-glucopyranosyl) to release alpha-D-glucopyranosyl (Rd). It is not able to hydrolyze alpha-L-arabinofuranosyl-(1-&gt;6)-alpha-D-glucopyranosyl (Rc). This Bifidobacterium breve (strain ACS-071-V-Sch8b) protein is Exo-alpha-(1-&gt;6)-L-arabinopyranosidase.